A 360-amino-acid chain; its full sequence is Membrane-bound lytic murein transglycosylase C (360 aa).

The signal sequence occupies residues 1 to 16 (MKKFFALALVAPLLIS). The N-palmitoyl cysteine moiety is linked to residue Cys17. Residue Cys17 is the site of S-diacylglycerol cysteine attachment.

It belongs to the transglycosylase Slt family.

Its subcellular location is the cell outer membrane. It catalyses the reaction Exolytic cleavage of the (1-&gt;4)-beta-glycosidic linkage between N-acetylmuramic acid (MurNAc) and N-acetylglucosamine (GlcNAc) residues in peptidoglycan, from either the reducing or the non-reducing ends of the peptidoglycan chains, with concomitant formation of a 1,6-anhydrobond in the MurNAc residue.. Functionally, murein-degrading enzyme. May play a role in recycling of muropeptides during cell elongation and/or cell division. The polypeptide is Membrane-bound lytic murein transglycosylase C (Citrobacter koseri (strain ATCC BAA-895 / CDC 4225-83 / SGSC4696)).